The chain runs to 379 residues: Putative F-box protein At5g62660 (379 aa).

Positions 35–84 (ALVAPEIPLDLLIEILTKLPAKSLMRFKCVSKLWSSLIRSRFFSNCYLTV) constitute an F-box domain.

The sequence is that of Putative F-box protein At5g62660 from Arabidopsis thaliana (Mouse-ear cress).